The primary structure comprises 249 residues: Protein TIFY 10B (249 aa).

Residues 113–148 (PESQSAPLTIFYGGRVMVFDDFSAEKAKEVIDLANK) form the Tify domain. The short motif at 204–229 (PIARRASLHRFLEKRKDRITSKAPYQ) is the Jas element. A Nuclear localization signal motif is present at residues 206-213 (ARRASLHR). Residues 225–249 (KAPYQIDGSAEASSKPTNPAWLSSR) form a disordered region. Residues 235–249 (EASSKPTNPAWLSSR) show a composition bias toward polar residues.

Belongs to the TIFY/JAZ family. As to quaternary structure, homo- and heterodimer. Interacts with COI1, MYC2, MYC3, MYC4, AFPH2/NINJA, TIFY10A/JAZ1, TIFY6B/JAZ3, TIFY11A/JAZ5, TIFY11B/JAZ6, TIFY5A/JAZ8, TIFY7/JAZ9, TIFY9/JAZ10, TIFY3A/JAZ11 and TIFY3B/JAZ12. Interacts with RHD6 and RSL1. (Microbial infection) Interacts with the pathogenic Pseudomonas syringae HopZ1a protein. In terms of processing, (Microbial infection) Acetylated by Pseudomonas syringae HopZ1a. Ubiquitinated. Targeted for degradation by the SCF(COI1) E3 ubiquitin ligase-proteasome pathway during jasmonate signaling. As to expression, expressed in cotyledons, hypocotyls, roots, sepals, petal vascular tissue and stigmas of developing flowers. Expressed in stamen filaments after jasmonic acid treatment.

Its subcellular location is the nucleus. In terms of biological role, repressor of jasmonate responses. Jasmonoyl-isoleucine (JA-Ile) specifically promotes COI1-TIFY10B/JAZ2 interaction. Activated by MYC2, MYC3 and MYC4 transcription factors. Interacts with and suppresses RHD6 and RSL1 transcription factor activities to negatively regulate jasmonate-stimulated root hair development. In Arabidopsis thaliana (Mouse-ear cress), this protein is Protein TIFY 10B.